A 475-amino-acid chain; its full sequence is Glucose-6-phosphate 1-dehydrogenase gcd1 (475 aa).

NADP(+) contacts are provided by R42 and K146. D-glucose 6-phosphate contacts are provided by K146, E214, and D233. The active-site Proton acceptor is H238. K332 is a binding site for D-glucose 6-phosphate. Residues R342 and R365 each contribute to the NADP(+) site.

It belongs to the glucose-6-phosphate dehydrogenase family.

It is found in the cytoplasm. It catalyses the reaction D-glucose 6-phosphate + NADP(+) = 6-phospho-D-glucono-1,5-lactone + NADPH + H(+). The protein operates within carbohydrate degradation; pentose phosphate pathway; D-ribulose 5-phosphate from D-glucose 6-phosphate (oxidative stage): step 1/3. Catalyzes the rate-limiting step of the oxidative pentose-phosphate pathway, which represents a route for the dissimilation of carbohydrates besides glycolysis. The main function of this enzyme is to provide reducing power (NADPH) and pentose phosphates for fatty acid and nucleic acid synthesis. The polypeptide is Glucose-6-phosphate 1-dehydrogenase gcd1 (Schizosaccharomyces pombe (strain 972 / ATCC 24843) (Fission yeast)).